The chain runs to 145 residues: AN1-type zinc finger protein 2A (145 aa).

2 consecutive AN1-type zinc fingers follow at residues 4 to 52 (PDLG…QKDV) and 94 to 142 (KIFT…RPTI). Residues Cys-10, Cys-15, Cys-25, Cys-28, Cys-33, His-36, His-42, Cys-44, Cys-100, Cys-105, Cys-115, Cys-118, Cys-123, His-126, His-132, and Cys-134 each coordinate Zn(2+).

It localises to the cytoplasm. The protein localises to the nucleus. In Homo sapiens (Human), this protein is AN1-type zinc finger protein 2A (ZFAND2A).